Reading from the N-terminus, the 185-residue chain is Bcl-2-modifying factor (185 aa).

The interval Met1 to Ser28 is disordered. The segment covering Glu8–Glu21 has biased composition (acidic residues). Residues Asp67–Pro75 are interaction with DLC2. Positions Ile134–Leu148 match the BH3 motif.

It belongs to the Bcl-2 family. In terms of assembly, interacts with MCL1, BCL2, BCL2L1/BCL-Xl, BCL2A1 and BCL2L2/BCL-w. Interacts with the myosin V actin motor complex through its binding to DLC2.

In terms of biological role, may play a role in apoptosis. In Rattus norvegicus (Rat), this protein is Bcl-2-modifying factor (Bmf).